We begin with the raw amino-acid sequence, 1920 residues long: rRNA biogenesis protein RRP5 (1920 aa).

Positions 1–65 (MVVPQKKFAN…GTSLSKKERE (65 aa)) are disordered. S1 motif domains lie at 128-210 (GMKL…LSLR), 226-291 (GMVF…LSSD), 314-384 (GMMV…LTLS), 400-473 (GDIF…GTLK), 490-557 (GMVT…VTYK), 577-646 (GLVT…LSFM), 661-733 (GSIV…LSSK), 753-822 (NSVV…LSLK), 866-930 (GSLI…LSLR), 958-1031 (EVHQ…LLLD), 1054-1129 (GSVV…LSVK), 1153-1224 (GQCV…LVQR), 1260-1334 (GDIL…LSLR), 1369-1438 (DMGV…VTLK), and 1459-1529 (GDMI…LGMK). Disordered stretches follow at residues 1535-1555 (NGDD…ECDP) and 1605-1652 (TDFD…LEHH). Positions 1620–1652 (NKDEKSKRREKQKDKEEREKKIQAAEGRLLEHH) are enriched in basic and acidic residues. HAT repeat units lie at residues 1651-1683 (HHAP…FMLS), 1685-1722 (ADIE…LENE), 1726-1758 (PPEE…YERT), 1759-1791 (EQYK…SSLK), 1828-1860 (GVAD…QEIR), and 1862-1897 (GEDD…YEKS).

In terms of tissue distribution, highly expressed in flowers and at lower levels in roots, leaves, stems and siliques.

Its subcellular location is the nucleus. The protein localises to the nucleolus. Functionally, involved in the biogenesis of ribosomal RNA (rRNA). Required for the formation of 5.8S rRNA. Required for normal development of female gametophytes. This Arabidopsis thaliana (Mouse-ear cress) protein is rRNA biogenesis protein RRP5.